The primary structure comprises 344 residues: Endoplasmic reticulum junction formation protein lunapark-1 (344 aa).

The Cytoplasmic portion of the chain corresponds to 1-39 (MGNLFSRTKSPATELERVVLSIEDFKKRLQTISASNSST). A helical transmembrane segment spans residues 40–60 (LYYYYMGVIIILSIAMAHTWL). Residues 61 to 68 (RFDDPTKT) are Lumenal-facing. Residues 69–89 (YVACALVFGATVIVLTGRYII) form a helical membrane-spanning segment. The Cytoplasmic portion of the chain corresponds to 90–344 (NCFFAWRTNR…ADETAVVEKS (255 aa)). Residues 116–140 (DLVKETLKFKEAKEILDRYEEKTEA) are a coiled coil. Disordered regions lie at residues 136-155 (EKTE…HQQK) and 171-192 (QKRV…IAFD). Residues 140 to 155 (AGNTPTENSKLIHQQK) are compositionally biased toward polar residues. A C4-type; plays a role in ER morphology zinc finger spans residues 239–264 (CSICHTHNGMSVPAEYPFISFRCFEC). A disordered region spans residues 275–344 (PHLPITRPPM…ADETAVVEKS (70 aa)). A compositionally biased stretch (polar residues) spans 312-326 (PNPSTDLTPSASQHG). Residues 327–344 (SDSEPEKNADETAVVEKS) are compositionally biased toward basic and acidic residues.

It belongs to the lunapark family.

It localises to the endoplasmic reticulum membrane. Functionally, plays a role in tubular endoplasmic reticulum network formation and maintenance. May be involved in central nervous system development. Has a presynaptic role in neurotransmission. Likely to operate in synaptogenesis by regulating vesicular transport or localization. Required for correct localization of rab-3 and snb-1. The protein is Endoplasmic reticulum junction formation protein lunapark-1 of Caenorhabditis briggsae.